The following is a 368-amino-acid chain: Molybdenum import ATP-binding protein ModC (368 aa).

In terms of domain architecture, ABC transporter spans 1 to 231 (MKGLQVAFKQ…QAMRPWQSFS (231 aa)). 33 to 40 (GRSGAGKT) is an ATP binding site. One can recognise a Mop domain in the interval 292–363 (KTSIRNIIEA…IKGVSVTQRD (72 aa)).

The protein belongs to the ABC transporter superfamily. Molybdate importer (TC 3.A.1.8) family. As to quaternary structure, the complex is composed of two ATP-binding proteins (ModC), two transmembrane proteins (ModB) and a solute-binding protein (ModA).

It is found in the cell inner membrane. The enzyme catalyses molybdate(out) + ATP + H2O = molybdate(in) + ADP + phosphate + H(+). Part of the ABC transporter complex ModABC involved in molybdenum import. Responsible for energy coupling to the transport system. The protein is Molybdenum import ATP-binding protein ModC of Vibrio vulnificus (strain YJ016).